We begin with the raw amino-acid sequence, 132 residues long: EF-hand calcium-binding domain-containing protein 10 (132 aa).

2 EF-hand domains span residues 64 to 99 (MDNS…LGLC) and 120 to 132 (EMNK…WSMF).

The sequence is that of EF-hand calcium-binding domain-containing protein 10 (Efcab10) from Mus musculus (Mouse).